Here is a 360-residue protein sequence, read N- to C-terminus: Peptide chain release factor 1 (360 aa).

Residue Gln-235 is modified to N5-methylglutamine. The span at 285–308 (KRQEAEASERRNLLGSGDRSDRNR) shows a compositional bias: basic and acidic residues. Residues 285 to 313 (KRQEAEASERRNLLGSGDRSDRNRTYNFP) are disordered.

The protein belongs to the prokaryotic/mitochondrial release factor family. In terms of processing, methylated by PrmC. Methylation increases the termination efficiency of RF1.

Its subcellular location is the cytoplasm. Functionally, peptide chain release factor 1 directs the termination of translation in response to the peptide chain termination codons UAG and UAA. This is Peptide chain release factor 1 from Photorhabdus laumondii subsp. laumondii (strain DSM 15139 / CIP 105565 / TT01) (Photorhabdus luminescens subsp. laumondii).